Consider the following 154-residue polypeptide: CASP-like protein ARALYDRAFT_485429 (154 aa).

At 1–12 (MENVPGSFGTSA) the chain is on the cytoplasmic side. Residues 13-33 (SFALRFGQTIFSAASLIFMCF) form a helical membrane-spanning segment. Topologically, residues 34 to 41 (DYDFYDFT) are extracellular. Residues 42–62 (TFCYLATVMAIVTPWSILLAL) traverse the membrane as a helical segment. Over 63–81 (TDTYSVLVKLLPQELRVLS) the chain is Cytoplasmic. The helical transmembrane segment at 82-102 (IVFAGDFVLSFLSLGGACAVA) threads the bilayer. Residues 103–128 (SATELLASADGKICDGNLCIQYQVSA) are Extracellular-facing. Residues 129-149 (ALAFLCWFLLLASALFNFWSL) traverse the membrane as a helical segment. Residues 150 to 154 (PSLYY) are Cytoplasmic-facing.

It belongs to the Casparian strip membrane proteins (CASP) family. As to quaternary structure, homodimer and heterodimers.

It localises to the cell membrane. The sequence is that of CASP-like protein ARALYDRAFT_485429 from Arabidopsis lyrata subsp. lyrata (Lyre-leaved rock-cress).